A 357-amino-acid polypeptide reads, in one-letter code: DNA integrity scanning protein DisA (357 aa).

Residues 8–146 (VKSIINILQL…GNLRYTLKDI (139 aa)) form the DAC domain. Residues Gly75, Leu93, and 106 to 110 (MRHRT) contribute to the ATP site.

This sequence belongs to the DisA family. Homooctamer. Mg(2+) serves as cofactor.

The catalysed reaction is 2 ATP = 3',3'-c-di-AMP + 2 diphosphate. Functionally, participates in a DNA-damage check-point that is active prior to asymmetric division when DNA is damaged. DisA forms globular foci that rapidly scan along the chromosomes during sporulation, searching for lesions. When a lesion is present, DisA pauses at the lesion site. This triggers a cellular response that culminates in a temporary block in sporulation initiation. In terms of biological role, also has diadenylate cyclase activity, catalyzing the condensation of 2 ATP molecules into cyclic di-AMP (c-di-AMP). c-di-AMP acts as a signaling molecule that couples DNA integrity with progression of sporulation. The rise in c-di-AMP level generated by DisA while scanning the chromosome, operates as a positive signal that advances sporulation; upon encountering a lesion, the DisA focus arrests at the damaged site and halts c-di-AMP synthesis. This chain is DNA integrity scanning protein DisA, found in Bacillus cereus (strain B4264).